Reading from the N-terminus, the 73-residue chain is Arabinogalactan protein 16 (73 aa).

The signal sequence occupies residues Met-1 to Ala-26. Gln-27 bears the Pyrrolidone carboxylic acid mark. A 4-hydroxyproline mark is found at Pro-31, Pro-33, and Pro-35. O-linked (Ara...) hydroxyproline glycans are attached at residues Pro-31, Pro-33, and Pro-35. The GPI-anchor amidated serine moiety is linked to residue Ser-37. Positions Asp-38–Phe-73 are cleaved as a propeptide — removed in mature form.

It belongs to the AG-peptide AGP family. Contains 4-hydroxyproline; hydroxylated on Pro-31, Pro-33 and Pro-35. Post-translationally, O-glycosylated on hydroxyprolines; noncontiguous hydroxylproline residues are glycosylated with arabinogalactan. Predominantly expressed in flowers.

It is found in the cell membrane. In terms of biological role, proteoglycan that seems to be implicated in diverse developmental roles such as differentiation, cell-cell recognition, embryogenesis and programmed cell death. This is Arabinogalactan protein 16 from Arabidopsis thaliana (Mouse-ear cress).